The sequence spans 103 residues: KRLLEDLGIKINEIIPEGASVKNLINLPQAWFNIVPYREVGLMTASFLQKDFGMPYILTTPMGIIDTADFIRQVQKNVNKLAPFFLKKTFDFESYIDYQTKFV.

Belongs to the ChlB/BchB/BchZ family. As to quaternary structure, protochlorophyllide reductase is composed of three subunits; ChlL, ChlN and ChlB. Forms a heterotetramer of two ChlB and two ChlN subunits. The cofactor is [4Fe-4S] cluster.

The protein localises to the plastid. It localises to the chloroplast. The enzyme catalyses chlorophyllide a + oxidized 2[4Fe-4S]-[ferredoxin] + 2 ADP + 2 phosphate = protochlorophyllide a + reduced 2[4Fe-4S]-[ferredoxin] + 2 ATP + 2 H2O. Its pathway is porphyrin-containing compound metabolism; chlorophyll biosynthesis (light-independent). Functionally, component of the dark-operative protochlorophyllide reductase (DPOR) that uses Mg-ATP and reduced ferredoxin to reduce ring D of protochlorophyllide (Pchlide) to form chlorophyllide a (Chlide). This reaction is light-independent. The NB-protein (ChlN-ChlB) is the catalytic component of the complex. This chain is Light-independent protochlorophyllide reductase subunit B (chlB), found in Equisetum scirpoides (Dwarf-scouring rush).